The primary structure comprises 210 residues: Ribosomal RNA large subunit methyltransferase E (210 aa).

The S-adenosyl-L-methionine site is built by Gly-60, Trp-62, Asp-80, Asp-96, and Asp-121. The active-site Proton acceptor is Lys-161.

This sequence belongs to the class I-like SAM-binding methyltransferase superfamily. RNA methyltransferase RlmE family.

Its subcellular location is the cytoplasm. The enzyme catalyses uridine(2552) in 23S rRNA + S-adenosyl-L-methionine = 2'-O-methyluridine(2552) in 23S rRNA + S-adenosyl-L-homocysteine + H(+). In terms of biological role, specifically methylates the uridine in position 2552 of 23S rRNA at the 2'-O position of the ribose in the fully assembled 50S ribosomal subunit. This is Ribosomal RNA large subunit methyltransferase E from Vesicomyosocius okutanii subsp. Calyptogena okutanii (strain HA).